The primary structure comprises 222 residues: Ribosomal RNA large subunit methyltransferase E (222 aa).

Basic and acidic residues predominate over residues 1 to 13; that stretch reads MSRSDKNPHERLK. A disordered region spans residues 1 to 22; that stretch reads MSRSDKNPHERLKTAKKRTASS. Positions 75, 77, 94, 110, and 134 each coordinate S-adenosyl-L-methionine. Residue Lys-174 is the Proton acceptor of the active site.

Belongs to the class I-like SAM-binding methyltransferase superfamily. RNA methyltransferase RlmE family.

The protein resides in the cytoplasm. It carries out the reaction uridine(2552) in 23S rRNA + S-adenosyl-L-methionine = 2'-O-methyluridine(2552) in 23S rRNA + S-adenosyl-L-homocysteine + H(+). In terms of biological role, specifically methylates the uridine in position 2552 of 23S rRNA at the 2'-O position of the ribose in the fully assembled 50S ribosomal subunit. The chain is Ribosomal RNA large subunit methyltransferase E from Novosphingobium aromaticivorans (strain ATCC 700278 / DSM 12444 / CCUG 56034 / CIP 105152 / NBRC 16084 / F199).